The primary structure comprises 351 residues: Maleylacetate reductase (351 aa).

It belongs to the iron-containing alcohol dehydrogenase family. Homodimer.

The catalysed reaction is 3-oxoadipate + NAD(+) = maleylacetate + NADH + H(+). The protein operates within aromatic compound metabolism. Its function is as follows. Involved in the gamma-resorcylate (2,6-dihydroxybenzoate) catabolism. Catalyzes the reduction of maleylacetate to 3-oxoadipate. The sequence is that of Maleylacetate reductase from Rhizobium sp. (strain MTP-10005).